The sequence spans 192 residues: Thymidine kinase (192 aa).

ATP-binding positions include 9–16 (GAMNSGKT) and 85–88 (DEAQ). Glu86 (proton acceptor) is an active-site residue. Positions 143, 146, 180, and 183 each coordinate Zn(2+).

This sequence belongs to the thymidine kinase family. In terms of assembly, homotetramer.

Its subcellular location is the cytoplasm. It catalyses the reaction thymidine + ATP = dTMP + ADP + H(+). In Lactiplantibacillus plantarum (strain ATCC BAA-793 / NCIMB 8826 / WCFS1) (Lactobacillus plantarum), this protein is Thymidine kinase.